The following is a 242-amino-acid chain: Cell division protein FtsQ (242 aa).

The Cytoplasmic portion of the chain corresponds to 1 to 12 (MWDNAEAMERLT). Residues 13-32 (RWLLVMMAMLLAASGLVWFY) traverse the membrane as a helical segment. Residues 33–242 (NSNHLPVKQV…DGLPEKESEE (210 aa)) are Periplasmic-facing. Residues 37 to 106 (LPVKQVSLKG…DTVEVVLTER (70 aa)) form the POTRA domain.

This sequence belongs to the FtsQ/DivIB family. FtsQ subfamily. As to quaternary structure, part of a complex composed of FtsB, FtsL and FtsQ.

The protein resides in the cell inner membrane. Functionally, essential cell division protein. May link together the upstream cell division proteins, which are predominantly cytoplasmic, with the downstream cell division proteins, which are predominantly periplasmic. May control correct divisome assembly. The chain is Cell division protein FtsQ from Neisseria gonorrhoeae (strain ATCC 700825 / FA 1090).